Here is a 190-residue protein sequence, read N- to C-terminus: Protein GrpE (190 aa).

The segment at 1 to 40 (MAKEKKEEVKEEEVSEATSTEGSTDVESTNNDDLTTETQA) is disordered. Polar residues predominate over residues 22-40 (GSTDVESTNNDDLTTETQA).

Belongs to the GrpE family. As to quaternary structure, homodimer.

It is found in the cytoplasm. Its function is as follows. Participates actively in the response to hyperosmotic and heat shock by preventing the aggregation of stress-denatured proteins, in association with DnaK and GrpE. It is the nucleotide exchange factor for DnaK and may function as a thermosensor. Unfolded proteins bind initially to DnaJ; upon interaction with the DnaJ-bound protein, DnaK hydrolyzes its bound ATP, resulting in the formation of a stable complex. GrpE releases ADP from DnaK; ATP binding to DnaK triggers the release of the substrate protein, thus completing the reaction cycle. Several rounds of ATP-dependent interactions between DnaJ, DnaK and GrpE are required for fully efficient folding. The sequence is that of Protein GrpE from Pediococcus pentosaceus (strain ATCC 25745 / CCUG 21536 / LMG 10740 / 183-1w).